A 406-amino-acid chain; its full sequence is Cysteine desulfurase (406 aa).

Position 226 is an N6-(pyridoxal phosphate)lysine (lysine 226). Catalysis depends on cysteine 364, which acts as the Cysteine persulfide intermediate.

It belongs to the class-V pyridoxal-phosphate-dependent aminotransferase family. Csd subfamily. In terms of assembly, homodimer. Interacts with SufE and the SufBCD complex composed of SufB, SufC and SufD. The interaction with SufE is required to mediate the direct transfer of the sulfur atom from the S-sulfanylcysteine. The cofactor is pyridoxal 5'-phosphate.

The protein resides in the cytoplasm. It carries out the reaction (sulfur carrier)-H + L-cysteine = (sulfur carrier)-SH + L-alanine. The enzyme catalyses L-selenocysteine + AH2 = hydrogenselenide + L-alanine + A + H(+). It participates in cofactor biosynthesis; iron-sulfur cluster biosynthesis. Its function is as follows. Cysteine desulfurases mobilize the sulfur from L-cysteine to yield L-alanine, an essential step in sulfur metabolism for biosynthesis of a variety of sulfur-containing biomolecules. Component of the suf operon, which is activated and required under specific conditions such as oxidative stress and iron limitation. Acts as a potent selenocysteine lyase in vitro, that mobilizes selenium from L-selenocysteine. Selenocysteine lyase activity is however unsure in vivo. In Yersinia pseudotuberculosis serotype O:1b (strain IP 31758), this protein is Cysteine desulfurase.